A 2812-amino-acid polypeptide reads, in one-letter code: Polyunsaturated fatty acid synthase subunit A (2812 aa).

One can recognise a Ketosynthase family 3 (KS3) domain in the interval 12–472; that stretch reads DTRIAVIGMS…GANYHAVLEE (461 aa). Residues Cys213, His348, and His390 each act as for beta-ketoacyl synthase activity in the active site. The Malonyl-CoA:ACP transacylase (MAT) domain occupies 602-913; it reads LFSGQGAQYT…TVSVNPASGK (312 aa). Residues 1000 to 1048 adopt a coiled-coil conformation; that stretch reads DEEAKREAARLQKQLEDAQRQLDEAKRAADEANQKLAAAKEEAKSAAAS. Carrier domains are found at residues 1114–1193, 1232–1308, and 1342–1418; these read ALLA…KAEI, ERAE…KAEI, and AKAE…KAEI. O-(pantetheine 4'-phosphoryl)serine occurs at positions 1152, 1267, and 1377. The segment at 1422 to 1442 is disordered; it reads SAPAPAAAAPAPAAPAPAAAA. Low complexity predominate over residues 1423-1442; that stretch reads APAPAAAAPAPAAPAPAAAA. The region spanning 1455–1531 is the Carrier 4 domain; that stretch reads AKAETVVMEV…EVVDAMKAEI (77 aa). Ser1490 is modified (O-(pantetheine 4'-phosphoryl)serine). The tract at residues 1535-1555 is disordered; that stretch reads SAPAPAAAAPAPAAPAPAAAA. A compositionally biased stretch (low complexity) spans 1536–1555; sequence APAPAAAAPAPAAPAPAAAA. 4 Carrier domains span residues 1568–1644, 1681–1757, 1792–1868, and 1903–1979; these read AKAE…KAEI. Ser1603, Ser1716, Ser1827, and Ser1938 each carry O-(pantetheine 4'-phosphoryl)serine. Residues 2257 to 2484 form the Ketoreductase (KR) domain; that stretch reads VVSGGARGIT…VKSICFGPWD (228 aa). An N-terminal hotdog fold region spans residues 2524–2651; sequence EILVGNWRTP…RAVVVLSSQG (128 aa). One can recognise a PKS/mFAS DH domain in the interval 2524 to 2812; that stretch reads EILVGNWRTP…SVIATDSLAF (289 aa). The interval 2540–2800 is dehydratase (DH) domain; it reads ETITLHRKIS…NEQGDLFIDV (261 aa). The active-site Proton acceptor; for dehydratase activity is the His2559. The interval 2666 to 2812 is C-terminal hotdog fold; that stretch reads ADPAAQSAVY…SVIATDSLAF (147 aa). Asp2730 functions as the Proton donor; for dehydratase activity in the catalytic mechanism.

Component of the polyunsaturated fatty acid synthase complex composed of at least ORF-A, ORF-B and ORF-C. Pantetheine 4'-phosphate serves as cofactor.

The protein operates within lipid metabolism; fatty acid biosynthesis. In terms of biological role, poliketide synthase-like protein; part of the polyunsaturated fatty acid synthase composed of the 3 PKS-like subunits A, B and C. While the saturated fatty acids (SFAs) in Thraustochytrium are produced by the conventional fatty acid synthase (FAS) pathway, polyunsaturated fatty acids (PUFAs) including docosahexeanoic acid (DHA) and docosapentaenoic acid (DPA) are synthesized via an anaerobical PKS pathway. PUFA synthase assimilates fatty acyl-CoA, the product of FAS, as the starter unit to synthesize DPA, and this starter unit may be butyryl-CoA, hexanoyl-CoA, or octanoyl-CoA. DPA and DHA biosynthesis seem to differ by the reduction at the N-3 position by PUFA synthase, not the extension of carbon chain. In DHA biosynthesis, PUFA synthase extends the fatty acyl chain from the methyl toward the carboxyl end, and the double bond is formed when the carbon chain is growing, instead of afterward. Therefore, PUFA synthase is unable to transform DPA to DHA, suggesting that DPA is not the precursor of DHA. Moreover, DPA molecule is partly extended by FAS KS domain, so DPA biosynthesis is less dependent on PUFA synthase KS domain than DHA. In Thraustochytrium sp. (strain ATCC 26185 / S-3), this protein is Polyunsaturated fatty acid synthase subunit A.